The following is a 152-amino-acid chain: MGRFGYAFQNYDATRHVRSSVREKDMSHKHAREVAVAIKGLSIEKARDYLQAVVNKDRAVAFRRYKNQVGHKADPGMMSGRYPQKTAREFIKVLDNLESNAEYKGMDLDRLKIVNATVHKGVIVKRFIPRAMGRATPKNNVLTHVELVAQEI.

The protein belongs to the universal ribosomal protein uL22 family. Part of the 50S ribosomal subunit.

Its function is as follows. This protein binds specifically to 23S rRNA. It makes multiple contacts with different domains of the 23S rRNA in the assembled 50S subunit and ribosome. The globular domain of the protein is located near the polypeptide exit tunnel on the outside of the subunit, while an extended beta-hairpin is found that lines the wall of the exit tunnel in the center of the 70S ribosome. In Nitrosopumilus maritimus (strain SCM1), this protein is Large ribosomal subunit protein uL22.